The chain runs to 209 residues: Homeobox protein ceh-2 (209 aa).

Basic and acidic residues predominate over residues 1 to 14; the sequence is MTLKFSVERLVDSE. 2 disordered regions span residues 1–46 and 181–209; these read MTLK…KSGK and HKRVRLEGSDPNAPMSNDEDDEDDKKSVS. Over residues 15–24 the composition is skewed to acidic residues; sequence KESEEADVEE. The segment at residues 126-185 is a DNA-binding region (homeobox); sequence NKRIRTAFSASQLIQLEKAFEGNHYVVGNERKQLAAKLSLTETQVKVWFQNRRTKHKRVR.

Belongs to the EMX homeobox family. As to expression, in the anterior pharynx, expressed in the I3 interneuron, the NSM and M3 motor neuron pairs, the three m2 muscle cells and the three e2 epithelial cells (at protein level).

It localises to the nucleus. Required for activity of the M3 pharyngeal motor neuron. The chain is Homeobox protein ceh-2 from Caenorhabditis elegans.